The following is a 697-amino-acid chain: Serine/threonine-protein kinase tousled-like 2 (697 aa).

2 disordered regions span residues 25 to 159 and 288 to 316; these read VAKG…SQSE and KLLI…SKSN. A compositionally biased stretch (polar residues) spans 31–44; that stretch reads HNESSNQSLCSVGS. Basic and acidic residues predominate over residues 46-61; sequence SDKELETPEKKSNDQR. A compositionally biased stretch (polar residues) spans 109–145; it reads SSPQHSLSNPPAAVQQGSPSSISSVNTDHSHTSTSHK. Coiled-coil stretches lie at residues 265-294 and 336-373; these read AFQN…IKKK and KLRL…IHNE. The 279-residue stretch at 388–666 folds into the Protein kinase domain; it reads YLLLHLLGRG…VHQLASDPYL (279 aa). ATP-binding positions include 394–402 and K417; that span reads LGRGGFSEV. Catalysis depends on D518, which acts as the Proton acceptor.

Belongs to the protein kinase superfamily. Ser/Thr protein kinase family. As to quaternary structure, monomer. May form homodimers; homodimerization may enhance autophosphoylation and enzymatic activity. Heterodimer with TLK1. Mg(2+) is required as a cofactor. Post-translationally, phosphorylated. Autophosphorylated; phosphorylation promotes the assembly of higher order oligomers and enzymatic activity.

It is found in the nucleus. It localises to the nucleoplasm. The protein localises to the cytoplasm. Its subcellular location is the perinuclear region. The protein resides in the cytoskeleton. The catalysed reaction is L-seryl-[protein] + ATP = O-phospho-L-seryl-[protein] + ADP + H(+). The enzyme catalyses L-threonyl-[protein] + ATP = O-phospho-L-threonyl-[protein] + ADP + H(+). Serine/threonine-protein kinase involved in the process of chromatin assembly and probably also DNA replication, transcription, repair, and chromosome segregation. Negative regulator of amino acid starvation-induced autophagy. This is Serine/threonine-protein kinase tousled-like 2 from Danio rerio (Zebrafish).